A 122-amino-acid chain; its full sequence is Small ribosomal subunit protein uS13 (122 aa).

The disordered stretch occupies residues 94–122 (KKLPVRGQRTHTNARTRKGPAKPIAGKKK).

The protein belongs to the universal ribosomal protein uS13 family. As to quaternary structure, part of the 30S ribosomal subunit. Forms a loose heterodimer with protein S19. Forms two bridges to the 50S subunit in the 70S ribosome.

In terms of biological role, located at the top of the head of the 30S subunit, it contacts several helices of the 16S rRNA. In the 70S ribosome it contacts the 23S rRNA (bridge B1a) and protein L5 of the 50S subunit (bridge B1b), connecting the 2 subunits; these bridges are implicated in subunit movement. Contacts the tRNAs in the A and P-sites. In Hyphomonas neptunium (strain ATCC 15444), this protein is Small ribosomal subunit protein uS13.